Here is a 160-residue protein sequence, read N- to C-terminus: General odorant-binding protein 2 (160 aa).

A signal peptide spans 1 to 20 (MFSFLILVFVASVADSVIGT). 3 disulfide bridges follow: cysteine 38/cysteine 73, cysteine 69/cysteine 127, and cysteine 116/cysteine 136.

This sequence belongs to the PBP/GOBP family. As to quaternary structure, homodimer. Detected in antenna (at protein level). Expressed at high levels in antenna.

In terms of biological role, present in the aqueous fluid surrounding olfactory sensory dendrites and are thought to aid in the capture and transport of hydrophobic odorants into and through this fluid. This chain is General odorant-binding protein 2, found in Bombyx mori (Silk moth).